A 383-amino-acid polypeptide reads, in one-letter code: Na(+)/H(+) antiporter (383 aa).

12 helical membrane passes run 1 to 21 (MEFI…SHIS), 24 to 44 (FGIP…QAGL), 51 to 71 (ILVH…AGLE), 83 to 103 (PGMF…WLTG), 112 to 132 (EAIF…VEVL), 145 to 165 (TILG…SFSL), 186 to 206 (LFYF…LMSL), 216 to 236 (IIIM…LIGL), 262 to 282 (VEAL…GLEV), 291 to 311 (ILFI…GGYI), 323 to 343 (ALMV…ILQI), and 353 to 373 (HYYS…PLIL).

This sequence belongs to the monovalent cation:proton antiporter 2 (CPA2) transporter (TC 2.A.37) family.

The protein localises to the cell membrane. In terms of biological role, na(+)/H(+) antiporter that extrudes sodium in exchange for external protons. Can also transport lithium. In Enterococcus hirae, this protein is Na(+)/H(+) antiporter (napA).